The sequence spans 197 residues: RILP-like protein 2 (197 aa).

One can recognise an RH1 domain in the interval 14 to 96 (EDEGALAKSP…KQEVEGLRRA (83 aa)). Residues 65–153 (LEALVNEGSL…VQEELQCYRS (89 aa)) adopt a coiled-coil conformation. The region spanning 119–184 (RPRFTLQELR…GNGEKEERTI (66 aa)) is the RH2 domain.

In terms of assembly, homodimer. Interacts (via N-terminus) with MYO5A, the interaction is required for its role in dendrite formation. Interacts with RAC1. Interacts with RAB8A; interaction is dependent on the phosphorylation of RAB8A on 'Thr-72'. Interacts with RAB10 and RAB12; interaction is dependent on the phosphorylation of 'Thr-73' on RAB10 and 'Ser-105' on RAB12.

The protein localises to the cytoplasm. Its subcellular location is the cytosol. The protein resides in the cytoskeleton. It localises to the microtubule organizing center. It is found in the centrosome. The protein localises to the cell projection. Its subcellular location is the cilium. Involved in cell shape and neuronal morphogenesis, positively regulating the establishment and maintenance of dendritic spines. Plays a role in cellular protein transport, including protein transport away from primary cilia. May function via activation of RAC1 and PAK1. This is RILP-like protein 2 (Rilpl2) from Rattus norvegicus (Rat).